Consider the following 95-residue polypeptide: MGLMDIHNAVCSLVIGVAILIATSQATFVDWGSSITSMGDFWESTCSAVGVSIAFSSGFSVLFYMGLVAVISALLAGSYHACFRLFTADMFKEEW.

The signal sequence occupies residues 1–26; the sequence is MGLMDIHNAVCSLVIGVAILIATSQA. The Virion surface portion of the chain corresponds to 27–55; the sequence is TFVDWGSSITSMGDFWESTCSAVGVSIAF. The helical transmembrane segment at 56-76 threads the bilayer; it reads SSGFSVLFYMGLVAVISALLA. Over 77–95 the chain is Intravirion; sequence GSYHACFRLFTADMFKEEW.

The protein belongs to the herpesviridae glycoprotein N family. In terms of assembly, interacts (via N-terminus) with gM (via N-terminus). The gM-gN heterodimer forms the gCII complex.

It is found in the virion membrane. The protein resides in the host membrane. The protein localises to the host Golgi apparatus. Its subcellular location is the host trans-Golgi network. Its function is as follows. Envelope glycoprotein necessary for proper maturation of gM and modulation of its membrane fusion activity. Also plays a critical role in virion morphogenesis. In Gallus gallus (Chicken), this protein is Envelope glycoprotein N.